Consider the following 433-residue polypeptide: Histidinol dehydrogenase (433 aa).

NAD(+) is bound by residues Tyr-129, Gln-191, and Asn-214. Substrate-binding residues include Ser-237, Gln-259, and His-262. Gln-259 and His-262 together coordinate Zn(2+). Catalysis depends on proton acceptor residues Glu-326 and His-327. Residues His-327, Asp-360, Glu-414, and His-419 each contribute to the substrate site. Zn(2+) is bound at residue Asp-360. His-419 provides a ligand contact to Zn(2+).

It belongs to the histidinol dehydrogenase family. Zn(2+) serves as cofactor.

The enzyme catalyses L-histidinol + 2 NAD(+) + H2O = L-histidine + 2 NADH + 3 H(+). It participates in amino-acid biosynthesis; L-histidine biosynthesis; L-histidine from 5-phospho-alpha-D-ribose 1-diphosphate: step 9/9. In terms of biological role, catalyzes the sequential NAD-dependent oxidations of L-histidinol to L-histidinaldehyde and then to L-histidine. The chain is Histidinol dehydrogenase from Methanosarcina barkeri (strain Fusaro / DSM 804).